We begin with the raw amino-acid sequence, 1487 residues long: Adhesion G protein-coupled receptor L2 (1487 aa).

The N-terminal stretch at 1–25 (MVSSGCRMRSLWFIIIISFSPSTEG) is a signal peptide. The Extracellular portion of the chain corresponds to 26 to 855 (FSRAALPFGL…VHHLLLTVIT (830 aa)). The region spanning 41–130 (SCEGYSIDLR…KYLEVQYECV (90 aa)) is the SUEL-type lectin domain. Asn99 carries an N-linked (GlcNAc...) asparagine glycan. Positions 139–398 (VCPGTLKAIV…ILRYSLEFGP (260 aa)) constitute an Olfactomedin-like domain. The span at 423 to 439 (STTSSASQRGPVSSTAA) shows a compositional bias: polar residues. The disordered stretch occupies residues 423–461 (STTSSASQRGPVSSTAAGPQDGSRGTKPPPAVSTTKIPP). N-linked (GlcNAc...) asparagine glycans are attached at residues Asn524 and Asn735. In terms of domain architecture, GAIN-B spans 663–841 (TRVSMPTENI…AILMAHREIA (179 aa)). 2 cysteine pairs are disulfide-bonded: Cys792/Cys823 and Cys811/Cys825. A GPS region spans residues 792–841 (CSFWNYSERTMMGYWSTQGCKLVDTNKTRTTCACSHLTNFAILMAHREIA). Residues 829-841 (TNFAILMAHREIA) are stachel. A helical membrane pass occupies residues 856–876 (WVGIVVSLVCLAICIFTFCFF). The Cytoplasmic portion of the chain corresponds to 877 to 884 (RGLQSDRN). The helical transmembrane segment at 885 to 905 (TIHKNLCINLFIAEFIFLIGI) threads the bilayer. Topologically, residues 906 to 911 (DKTKYT) are extracellular. A helical membrane pass occupies residues 912–932 (IACPVFAGLLHFFFLAAFSWM). The Cytoplasmic portion of the chain corresponds to 933–955 (CLEGVQLYLMLVEVFESEYSRKK). A helical membrane pass occupies residues 956-976 (YYYVAGYLFPATVVGVSAAID). The Extracellular portion of the chain corresponds to 977–994 (YKSYGTVQACWLHVDNYF). Residues 995–1015 (IWSFIGPVTFIILLNIIFLVI) traverse the membrane as a helical segment. The Cytoplasmic segment spans residues 1016-1064 (TLCKMVKHSNTLKPDSSRLENINNYRVCDGYYNTDLPGYEDNKPFIKSW). The helical transmembrane segment at 1065-1085 (VLGAFALLCLLGLTWSFGLLF) threads the bilayer. Residues 1086-1090 (VNEET) lie on the Extracellular side of the membrane. Residues 1091-1111 (VVMAYLFTAFNAFQGLFIFIF) traverse the membrane as a helical segment. The segment at 1386–1430 (EADDHLQSPNRDSLYTSMPNLRDSPYPESSPDMAEDLSPSRRSEN) is disordered. The segment covering 1392–1404 (QSPNRDSLYTSMP) has biased composition (polar residues). Residues Ser1402, Ser1437, and Ser1458 each carry the phosphoserine modification.

It belongs to the G-protein coupled receptor 2 family. Adhesion G-protein coupled receptor (ADGR) subfamily. Heterodimer of 2 chains generated by proteolytic processing; the large extracellular N-terminal fragment and the membrane-bound C-terminal fragment predominantly remain associated and non-covalently linked. Autoproteolytically processed at the GPS region of the GAIN-B domain; this cleavage modulates receptor activity. As to expression, ubiquitously expressed. In neurons, specifically localizes to dendritic domains of CA1 pyramidal neurons in the S. lacunosummoleculare.

Its subcellular location is the postsynaptic cell membrane. With respect to regulation, forms a heterodimer of 2 chains generated by proteolytic processing that remain associated through non-covalent interactions mediated by the GAIN-B domain. In the inactivated receptor, the Stachel sequence (also named stalk) is embedded in the GAIN-B domain, where it adopts a beta-strand conformation. On activation, the Stachel moves into the 7 transmembrane region and adopts a twisted hook-shaped configuration that forms contacts within the receptor, leading to coupling of a G-alpha protein, which activates signaling. The cleaved GAIN-B and N-terminal domains can then dissociate from the rest of the receptor. Its function is as follows. Orphan adhesion G-protein coupled receptor (aGPCR), which mediates synapse specificity. Ligand binding causes a conformation change that triggers signaling via guanine nucleotide-binding proteins (G proteins) and modulates the activity of downstream effectors. Following G-protein coupled receptor activation, associates with cell adhesion molecules that are expressed at the surface of adjacent cells to direct synapse specificity. Specifically mediates the establishment of perforant-path synapses on CA1-region pyramidal neurons in the hippocampus. Localizes to postsynaptic spines in excitatory synapses in the S.lacunosum-moleculare and interacts with presynaptic cell adhesion molecules, such as teneurins, promoting synapse formation. In Mus musculus (Mouse), this protein is Adhesion G protein-coupled receptor L2.